The primary structure comprises 375 residues: Succinyl-diaminopimelate desuccinylase (375 aa).

Histidine 66 is a binding site for Zn(2+). Residue aspartate 68 is part of the active site. A Zn(2+)-binding site is contributed by aspartate 99. Glutamate 133 functions as the Proton acceptor in the catalytic mechanism. Residues glutamate 134, glutamate 162, and histidine 348 each coordinate Zn(2+).

The protein belongs to the peptidase M20A family. DapE subfamily. In terms of assembly, homodimer. Zn(2+) serves as cofactor. Requires Co(2+) as cofactor.

The enzyme catalyses N-succinyl-(2S,6S)-2,6-diaminopimelate + H2O = (2S,6S)-2,6-diaminopimelate + succinate. It participates in amino-acid biosynthesis; L-lysine biosynthesis via DAP pathway; LL-2,6-diaminopimelate from (S)-tetrahydrodipicolinate (succinylase route): step 3/3. Catalyzes the hydrolysis of N-succinyl-L,L-diaminopimelic acid (SDAP), forming succinate and LL-2,6-diaminopimelate (DAP), an intermediate involved in the bacterial biosynthesis of lysine and meso-diaminopimelic acid, an essential component of bacterial cell walls. The chain is Succinyl-diaminopimelate desuccinylase from Salmonella typhi.